Here is a 286-residue protein sequence, read N- to C-terminus: Putative sensory transducer protein YfmS (286 aa).

Positions I68–E286 constitute a Methyl-accepting transducer domain.

This sequence belongs to the methyl-accepting chemotaxis (MCP) protein family.

Functionally, chemotactic-signal transducers respond to changes in the concentration of attractants and repellents in the environment, transduce a signal from the outside to the inside of the cell, and facilitate sensory adaptation through the variation of the level of methylation. Attractants increase the level of methylation while repellents decrease the level of methylation. This chain is Putative sensory transducer protein YfmS (yfmS), found in Bacillus subtilis (strain 168).